The sequence spans 210 residues: Ras-related protein Rab-43 (210 aa).

Position 23–30 (23–30 (GDASVGKT)) interacts with GTP. Positions 45–53 (QGSTIGVDF) match the Effector region motif. A Phosphoserine modification is found at Ser-47. GTP is bound at residue 71–75 (DTAGQ). Thr-80 carries the phosphothreonine modification. GTP contacts are provided by residues 129–132 (NKSD) and 161–162 (AK). S-geranylgeranyl cysteine attachment occurs at residues Cys-208 and Cys-210. Cys-210 is subject to Cysteine methyl ester.

The protein belongs to the small GTPase superfamily. Rab family. In terms of assembly, interacts with GDI1, GDI2 and CHM; phosphorylation at Thr-80 disrupts these interactions.

It localises to the cytoplasmic vesicle. It is found in the phagosome. The protein resides in the phagosome membrane. The protein localises to the golgi apparatus. Its subcellular location is the trans-Golgi network membrane. It localises to the trans-Golgi network. Its function is as follows. The small GTPases Rab are key regulators of intracellular membrane trafficking, from the formation of transport vesicles to their fusion with membranes. Rabs cycle between an inactive GDP-bound form and an active GTP-bound form that is able to recruit to membranes different set of downstream effectors directly responsible for vesicle formation, movement, tethering and fusion. The low intrinsic GTPase activity of RAB43 is activated by USP6NL. Involved in retrograde transport from the endocytic pathway to the Golgi apparatus. Involved in the transport of Shiga toxin from early and recycling endosomes to the trans-Golgi network. Required for the structural integrity of the Golgi complex. Plays a role in the maturation of phagosomes that engulf pathogens, such as S.aureus and Mycobacterium. This Rattus norvegicus (Rat) protein is Ras-related protein Rab-43 (Rab43).